The primary structure comprises 893 residues: 104 kDa microneme/rhoptry antigen (893 aa).

The N-terminal stretch at 1–19 is a signal peptide; it reads MKFLVLLFNILCLFPILGA. Disordered stretches follow at residues 492–666, 681–799, and 818–873; these read SKKK…FDPK, KTKE…PTGK, and KEHM…RKPD. Basic and acidic residues-rich tracts occupy residues 525–565 and 573–591; these read SESK…EHKP and KRPE…ESPK. A compositionally biased stretch (low complexity) spans 595–606; it reads RPVSPQRPVSPK. 3 stretches are compositionally biased toward basic and acidic residues: residues 731 to 755, 788 to 797, and 818 to 830; these read EEVK…DSPT, EAGRILRDPT, and KEHM…KIVV. Residues 831-841 are compositionally biased toward acidic residues; it reads DDDGTEADDED. Positions 851–869 are enriched in basic residues; sequence STVRRRRPRPKKSSKSSKP. D873 carries GPI-anchor amidated aspartate lipidation. The propeptide at 874–893 is removed in mature form; that stretch reads SAFVPSIIFIFLVSLIVGIL.

It is found in the cell membrane. This Theileria annulata protein is 104 kDa microneme/rhoptry antigen.